The chain runs to 76 residues: Large ribosomal subunit protein bL28 (76 aa).

A disordered region spans residues 21-42 (RGKAKKEGGVGKHITKTSRRRQ). A compositionally biased stretch (basic residues) spans 33–42 (HITKTSRRRQ).

The protein belongs to the bacterial ribosomal protein bL28 family.

In Halothermothrix orenii (strain H 168 / OCM 544 / DSM 9562), this protein is Large ribosomal subunit protein bL28.